The sequence spans 765 residues: 5-methyltetrahydropteroyltriglutamate--homocysteine methyltransferase (765 aa).

2 residues coordinate 5-methyltetrahydropteroyltri-L-glutamate: lysine 18 and asparagine 116. Residues 437–439 (IGS) and glutamate 490 each bind L-homocysteine. Residues 437-439 (IGS) and glutamate 490 each bind L-methionine. 5-methyltetrahydropteroyltri-L-glutamate contacts are provided by residues aspartate 495, tyrosine 518, 521–522 (RC), and tryptophan 567. Aspartate 605 contacts L-homocysteine. L-methionine is bound at residue aspartate 605. Histidine 647, cysteine 649, histidine 658, aspartate 662, and glutamate 671 together coordinate Zn(2+). Catalysis depends on histidine 701, which acts as the Proton donor. A Zn(2+)-binding site is contributed by cysteine 733.

Belongs to the vitamin-B12 independent methionine synthase family. Requires Zn(2+) as cofactor.

Its subcellular location is the cytoplasm. The catalysed reaction is 5-methyltetrahydropteroyltri-L-glutamate + L-homocysteine = tetrahydropteroyltri-L-glutamate + L-methionine. It functions in the pathway amino-acid biosynthesis; L-methionine biosynthesis via de novo pathway; L-methionine from L-homocysteine (MetE route): step 1/1. Functionally, catalyzes the transfer of a methyl group from 5-methyltetrahydrofolate to homocysteine resulting in methionine formation. The protein is 5-methyltetrahydropteroyltriglutamate--homocysteine methyltransferase (METE) of Mesembryanthemum crystallinum (Common ice plant).